The chain runs to 286 residues: MRYIRLCIISLLATLPLAVHASPQPLEQIKLSESQLSGRVGMIEMDLASGRTLTAWRADERFPMMSTFKVVLCGAVLARVDAGDEQLERKIHYRQQDLVDYSPVSEKHLADGMTVGELCAAAITMSDNSAANLLLATVGGPAGLTAFLRQIGDNVTRLDRWETELNEALPGDARDTTTPASMAATLRKLLTSQRLSARSQRQLLQWMVDDRVAGPLIRSVLPAGWFIADKTGASKRGARGIVALLGPNNKAERIVVIYLRDTPASMAERNQQIAGIGAALIEHWQR.

The N-terminal stretch at Met1–Ala21 is a signal peptide. The active-site Acyl-ester intermediate is Ser66. Cysteines 73 and 119 form a disulfide. Catalysis depends on Glu164, which acts as the Proton acceptor. Residue Lys230 to Gly232 participates in substrate binding.

The protein belongs to the class-A beta-lactamase family.

It carries out the reaction a beta-lactam + H2O = a substituted beta-amino acid. Functionally, SHV enzymes hydrolyze broad spectrum cephalosporins notably cefotaxime and ceftazidime. SHV-5 causes particularly high levels of resistance to aztreonam and ceftazidime. In Klebsiella pneumoniae, this protein is Beta-lactamase SHV-5 (bla).